A 431-amino-acid polypeptide reads, in one-letter code: Putative helicase 055L (431 aa).

A Helicase ATP-binding domain is found at 73–222 (WGHVTSKGYC…ALGAFFGRED (150 aa)). 86–93 (CPPGFGKT) serves as a coordination point for ATP. A DEAH box motif is present at residues 175-178 (DEAH). Residues 403 to 431 (KCDASRPSQSTPTPTGSSQPAPRTRRPQR) form a disordered region. Over residues 407 to 424 (SRPSQSTPTPTGSSQPAP) the composition is skewed to low complexity.

In Frog virus 3 (isolate Goorha) (FV-3), this protein is Putative helicase 055L.